The chain runs to 624 residues: tRNA uridine 5-carboxymethylaminomethyl modification enzyme MnmG (624 aa).

FAD is bound by residues 14–19, Val126, and Ser181; that span reads GGGHAG. 273-287 contributes to the NAD(+) binding site; the sequence is GPRYCPSIEDKVVRF. Gln370 contributes to the FAD binding site.

The protein belongs to the MnmG family. As to quaternary structure, homodimer. Heterotetramer of two MnmE and two MnmG subunits. FAD serves as cofactor.

It is found in the cytoplasm. NAD-binding protein involved in the addition of a carboxymethylaminomethyl (cmnm) group at the wobble position (U34) of certain tRNAs, forming tRNA-cmnm(5)s(2)U34. The chain is tRNA uridine 5-carboxymethylaminomethyl modification enzyme MnmG from Geotalea uraniireducens (strain Rf4) (Geobacter uraniireducens).